The primary structure comprises 363 residues: UDP-N-acetylglucosamine--N-acetylmuramyl-(pentapeptide) pyrophosphoryl-undecaprenol N-acetylglucosamine transferase (363 aa).

UDP-N-acetyl-alpha-D-glucosamine is bound by residues 15-17, Asn-127, Arg-169, Ser-197, Ile-251, 270-275, and Gln-296; these read TGG and ALTVSE.

Belongs to the glycosyltransferase 28 family. MurG subfamily.

The protein localises to the cell inner membrane. It catalyses the reaction di-trans,octa-cis-undecaprenyl diphospho-N-acetyl-alpha-D-muramoyl-L-alanyl-D-glutamyl-meso-2,6-diaminopimeloyl-D-alanyl-D-alanine + UDP-N-acetyl-alpha-D-glucosamine = di-trans,octa-cis-undecaprenyl diphospho-[N-acetyl-alpha-D-glucosaminyl-(1-&gt;4)]-N-acetyl-alpha-D-muramoyl-L-alanyl-D-glutamyl-meso-2,6-diaminopimeloyl-D-alanyl-D-alanine + UDP + H(+). It functions in the pathway cell wall biogenesis; peptidoglycan biosynthesis. In terms of biological role, cell wall formation. Catalyzes the transfer of a GlcNAc subunit on undecaprenyl-pyrophosphoryl-MurNAc-pentapeptide (lipid intermediate I) to form undecaprenyl-pyrophosphoryl-MurNAc-(pentapeptide)GlcNAc (lipid intermediate II). The protein is UDP-N-acetylglucosamine--N-acetylmuramyl-(pentapeptide) pyrophosphoryl-undecaprenol N-acetylglucosamine transferase of Dichelobacter nodosus (strain VCS1703A).